The following is a 170-amino-acid chain: NADH-quinone oxidoreductase subunit J (170 aa).

5 helical membrane passes run 1-21 (MEFVFYVCSFAAVVSTFFVII), 30-50 (VYLIISLLSIAGVFFSLGAFF), 56-76 (VIIYAGAIIVLFVFVIMMLNI), 94-114 (IGPSILSLILLLSMTYAIFFL), and 138-158 (VFLVELSSILLLSALVVIFHI).

The protein belongs to the complex I subunit 6 family. As to quaternary structure, composed of 13 different subunits. Subunits NuoA, H, J, K, L, M, N constitute the membrane sector of the complex.

It localises to the cell membrane. It carries out the reaction a quinone + NADH + 5 H(+)(in) = a quinol + NAD(+) + 4 H(+)(out). In terms of biological role, NDH-1 shuttles electrons from NADH, via FMN and iron-sulfur (Fe-S) centers, to quinones in the respiratory chain. Couples the redox reaction to proton translocation (for every two electrons transferred, four hydrogen ions are translocated across the cytoplasmic membrane), and thus conserves the redox energy in a proton gradient. This Buchnera aphidicola subsp. Acyrthosiphon pisum (strain APS) (Acyrthosiphon pisum symbiotic bacterium) protein is NADH-quinone oxidoreductase subunit J (nuoJ).